Here is a 246-residue protein sequence, read N- to C-terminus: Neuromodulin (246 aa).

Residues 1-246 are disordered; the sequence is MLCCMRRTKQ…EESKADQENA (246 aa). S-palmitoyl cysteine attachment occurs at residues cysteine 3 and cysteine 4. The span at 9 to 33 shows a compositional bias: basic and acidic residues; sequence KQVEKNEDGDQKIEQDGIKPEDKAH. The 30-residue stretch at 32–61 folds into the IQ domain; the sequence is AHKAATKIQASFRGHITRKKLKGEKKADAP. 2 stretches are compositionally biased toward low complexity: residues 87 to 99 and 125 to 157; these read ASAA…ADSA and SEQP…KAST. Positions 164–176 are enriched in basic and acidic residues; sequence KADEAQDKEEPKQ. The span at 177 to 203 shows a compositional bias: low complexity; the sequence is ADVPAADTTATTTPAAEDATAKATAQP. Basic and acidic residues-rich tracts occupy residues 213–225 and 237–246; these read TEEK…ETKP and EESKADQENA.

The protein belongs to the neuromodulin family. In terms of assembly, binds calmodulin with a greater affinity in the absence of Ca(2+) than in its presence. In terms of processing, palmitoylated. Palmitoylation is essential for plasma membrane association. In terms of tissue distribution, expressed in neurons.

The protein localises to the cell membrane. It is found in the cell projection. Its subcellular location is the growth cone membrane. The protein resides in the synapse. It localises to the filopodium membrane. In terms of biological role, this protein is associated with nerve growth. It is a major component of the motile 'growth cones' that form the tips of elongating axons. Plays a role in axonal and dendritic filopodia induction. This chain is Neuromodulin (GAP43), found in Gallus gallus (Chicken).